Reading from the N-terminus, the 436-residue chain is 3-ketoacyl-CoA thiolase (436 aa).

C99 functions as the Acyl-thioester intermediate in the catalytic mechanism. Active-site proton acceptor residues include H392 and C422.

The protein belongs to the thiolase-like superfamily. Thiolase family. In terms of assembly, heterotetramer of two alpha chains (FadJ) and two beta chains (FadI).

It is found in the cytoplasm. It carries out the reaction an acyl-CoA + acetyl-CoA = a 3-oxoacyl-CoA + CoA. It functions in the pathway lipid metabolism; fatty acid beta-oxidation. Its function is as follows. Catalyzes the final step of fatty acid oxidation in which acetyl-CoA is released and the CoA ester of a fatty acid two carbons shorter is formed. This chain is 3-ketoacyl-CoA thiolase, found in Photorhabdus laumondii subsp. laumondii (strain DSM 15139 / CIP 105565 / TT01) (Photorhabdus luminescens subsp. laumondii).